A 423-amino-acid chain; its full sequence is Growth hormone-releasing hormone receptor (423 aa).

Positions 1–22 are cleaved as a signal peptide; sequence MDSGVWAACIFCLLSSLPVALG. Over 23-130 the chain is Extracellular; it reads HVHPECDFIT…DEKSYFSTVR (108 aa). 3 disulfide bridges follow: C41–C64, C55–C96, and C78–C112. An N-linked (GlcNAc...) asparagine glycan is attached at N50. Residues 131–151 form a helical membrane-spanning segment; sequence IVYTTGHSVSAVALFVAIAIL. Over 152-167 the chain is Cytoplasmic; the sequence is VALRRLHCPRNYIHSQ. The chain crosses the membrane as a helical span at residues 168-188; that stretch reads LFATFILKAGAVFLKDAALFH. The Extracellular segment spans residues 189–210; sequence SENTDHCSFSTVLCKVSVATSH. The helical transmembrane segment at 211–231 threads the bilayer; that stretch reads FATMTNFSWLLAEAVYLTCLL. Over 232–240 the chain is Cytoplasmic; that stretch reads ASTSPSTRR. The chain crosses the membrane as a helical span at residues 241 to 261; that stretch reads AFWWLVLAGWGLPLLFTGTWV. Over 262–283 the chain is Extracellular; the sequence is GCKLAFEDVACWDLDDSSPYWW. Residues 284 to 304 form a helical membrane-spanning segment; sequence IIKGPIVLSVGVNFGLFLNII. The Cytoplasmic segment spans residues 305–331; that stretch reads RILLRKLEPAQGSLHTQPQYWRLSKST. Residues 332–352 form a helical membrane-spanning segment; that stretch reads LLLIPLFGIHYVIFNFLPDSA. At 353-357 the chain is on the extracellular side; sequence GLGIR. A helical membrane pass occupies residues 358 to 378; it reads LPLELGLGSFQGFIVAILYCF. Topologically, residues 379–423 are cytoplasmic; it reads LNQEVRTEISRRWHGHDPELLPAWRTHAKWAKPSRSRAKVLTTVC.

It belongs to the G-protein coupled receptor 2 family. In terms of tissue distribution, pituitary gland. Also detected in the lymphocytes and thymocytes.

It is found in the cell membrane. Functionally, receptor for GRF, coupled to G proteins which activate adenylyl cyclase. Stimulates somatotroph cell growth, growth hormone gene transcription and growth hormone secretion. This Sus scrofa (Pig) protein is Growth hormone-releasing hormone receptor (GHRHR).